A 399-amino-acid chain; its full sequence is Trimethyllysine dioxygenase (399 aa).

Fe cation contacts are provided by histidine 214, aspartate 216, and histidine 360.

Belongs to the gamma-BBH/TMLD family. Fe(2+) serves as cofactor. The cofactor is L-ascorbate.

The protein resides in the cytoplasm. It carries out the reaction N(6),N(6),N(6)-trimethyl-L-lysine + 2-oxoglutarate + O2 = (3S)-3-hydroxy-N(6),N(6),N(6)-trimethyl-L-lysine + succinate + CO2. Its pathway is amine and polyamine biosynthesis; carnitine biosynthesis. Its function is as follows. Converts trimethyllysine (TML) into hydroxytrimethyllysine (HTML). This chain is Trimethyllysine dioxygenase, found in Meyerozyma guilliermondii (strain ATCC 6260 / CBS 566 / DSM 6381 / JCM 1539 / NBRC 10279 / NRRL Y-324) (Yeast).